Consider the following 867-residue polypeptide: MAQQGQQGQMASGDSNLNFRMVAEIQNVEGQNLQEQVCPEPIFRFFRENKVEIASAITRPFPFLMGLRDRSFISEQMYEHFQEAFRNLVPVTRVMYCVLSELEKTFGWSHLEALFSRINLMAYPDLNEIYRSFQNVCYEHSPLQMNNVNDLEDRPRLLPYGKQENSNACHEMDDIAVPQEALSSSPRCEPGFSSESCEQLALPKAGGGDAEDAPSLLPGGGVSCKLAIQIDEGESEEMPKLLPYDTEVLESNGMIDAARTYSTAPGEKQGEEEGRNSPRKRNQDKEKYQESPEGRDKETFDLKTPQVTNEGEPEKGLCLLPGEGEEGSDDCSEMCDGEEPQEASSSLARCGSVSCLSAETFDLKTPQVTNEGEPEKELSLLPGEGEEGSDDCSEMCDGEERQEASSSLARRGSVSSELENHPMNEEGESEELASSLLYDNVPGAEQSAYENEKCSCVMCFSEEVPGSPEARTESDQACGTMDTVDIANNSTLGKPKRKRRKKRGHGWSRMRMRRQENSQQNDNSKADGQVVSSEKKANVNLKDLSKIRGRKRGKPGTRFTQSDRAAQKRVRSRASRKHKDETVDFKAPLLPVTCGGVKGILHKKKLQQGILVKCIQTEDGKWFTPTEFEIKGGHARSKNWRLSVRCGGWPLRWLMENGFLPDPPRIRYRKKKRILKSQNNSSVDPCMRNLDECEVCRDGGELFCCDTCSRVFHEDCHIPPVEAERTPWNCIFCRMKESPGSQQCCQESEVLERQMCPEEQLKCEFLLLKVYCCSESSFFAKIPYYYYIREACQGLKEPMWLDKIKKRLNEHGYPQVEGFVQDMRLIFQNHRASYKYKDFGQMGFRLEAEFEKNFKEVFAIQETNGNN.

An HSR domain is found at 22–138 (VAEIQNVEGQ…IYRSFQNVCY (117 aa)). Disordered regions lie at residues 260–341 (TYST…EEPQ), 365–432 (TPQV…SEEL), and 486–580 (IANN…KHKD). Basic and acidic residues predominate over residues 268 to 301 (KQGEEEGRNSPRKRNQDKEKYQESPEGRDKETFD). 2 stretches are compositionally biased toward acidic residues: residues 323–341 (EGEE…EEPQ) and 384–397 (EGEE…EMCD). A compositionally biased stretch (low complexity) spans 404 to 416 (ASSSLARRGSVSS). Basic residues-rich tracts occupy residues 494-512 (KPKR…RMRM) and 567-577 (QKRVRSRASRK). The Nuclear localization signal motif lies at 495-514 (PKRKRRKKRGHGWSRMRMRR). The 82-residue stretch at 580-661 (DETVDFKAPL…RWLMENGFLP (82 aa)) folds into the SAND domain. Residues 690 to 736 (LDECEVCRDGGELFCCDTCSRVFHEDCHIPPVEAERTPWNCIFCRMK) form a PHD-type zinc finger. Threonine 726 is subject to Phosphothreonine. The Bromo domain occupies 754-857 (QMCPEEQLKC…AEFEKNFKEV (104 aa)).

Interacts with PIN1. In terms of processing, phosphorylation at Thr-726 promotes binding of PIN1 and subsequent isomerization of Pro-727. High levels in spleen and peripheral blood leukocytes, much lower levels in tonsils, thymus, prostate, ovary, small intestine, and colon. Very low levels in heart, brain, placenta, lung, liver, skeletal muscle, kidney, and pancreas. Not detected in brain, liver and muscle.

It localises to the nucleus. The protein localises to the PML body. The protein resides in the cytoplasm. Functionally, component of the nuclear body, also known as nuclear domain 10, PML oncogenic domain, and KR body. May be involved in the pathogenesis of acute promyelocytic leukemia and viral infection. May play a role in chromatin-mediated regulation of gene expression although it does not bind to histone H3 tails. This is Nuclear body protein SP140 from Homo sapiens (Human).